The primary structure comprises 735 residues: Wall-associated receptor kinase 1 (735 aa).

The signal sequence occupies residues 1-24 (MKVQEGLFLVAIFFSLACTQLVKG). Residues 25–331 (QHQPGENCQN…TTTMSCKRKE (307 aa)) are Extracellular-facing. 9 N-linked (GlcNAc...) asparagine glycosylation sites follow: asparagine 38, asparagine 56, asparagine 80, asparagine 90, asparagine 113, asparagine 140, asparagine 209, asparagine 235, and asparagine 250. The interval 67-254 (RPHVLSDIEV…SICGGNSTCL (188 aa)) is polygalacturonic acid-binding. The 48-residue stretch at 234–281 (GNQTCEQVGSTSICGGNSTCLDSTPRNGYICRCNEGFDGNPYLSAGCQ) folds into the EGF-like 1 domain. Cystine bridges form between cysteine 238–cysteine 253, cysteine 247–cysteine 264, cysteine 266–cysteine 280, cysteine 286–cysteine 303, cysteine 297–cysteine 312, and cysteine 314–cysteine 327. Positions 282–328 (DVNECTTSSTIHRHNCSDPKTCRNKVGGFYCKCQSGYRLDTTTMSCK) constitute an EGF-like 2; calcium-binding domain. Asparagine 296 carries an N-linked (GlcNAc...) asparagine glycan. The helical transmembrane segment at 332–352 (FAWTTILLVTTIGFLVILLGV) threads the bilayer. Residues 353–735 (ACIQQRMKHL…VAILDIETGR (383 aa)) lie on the Cytoplasmic side of the membrane. At threonine 398 the chain carries Phosphothreonine. The 284-residue stretch at 409–692 (YAESRILGQG…RVEKTKHKWS (284 aa)) folds into the Protein kinase domain. ATP contacts are provided by residues 415 to 423 (LGQGGQGTV) and lysine 437. Position 482 is a phosphotyrosine (tyrosine 482). Aspartate 534 acts as the Proton acceptor in catalysis. 2 positions are modified to phosphothreonine: threonine 568 and threonine 573. Tyrosine 581 is modified (phosphotyrosine).

Belongs to the protein kinase superfamily. Ser/Thr protein kinase family. Interacts with the glycine-rich proteins GRP3 and GRP3S, and the type 2C protein phosphatase KAPP. Component of a 500 kDa complex, composed of WAK1, GRP3 and KAPP. Interacts with the oxygen-evolving enhancer protein 2 (OEE2). As to expression, predominantly expressed in green tissues such as stems and leaves. Detected at organ junctions.

It is found in the membrane. The catalysed reaction is L-seryl-[protein] + ATP = O-phospho-L-seryl-[protein] + ADP + H(+). It carries out the reaction L-threonyl-[protein] + ATP = O-phospho-L-threonyl-[protein] + ADP + H(+). Its function is as follows. Serine/threonine-protein kinase that may function as a signaling receptor of extracellular matrix component. Binding to pectin may have significance in the control of cell expansion, morphogenesis and development. Required during plant's response to pathogen infection and in plant defense against heavy metal toxicity. Phosphorylates the oxygen-evolving enhancer protein 2 (OEE2) in an GRP-3-dependent manner. The chain is Wall-associated receptor kinase 1 (WAK1) from Arabidopsis thaliana (Mouse-ear cress).